Here is a 104-residue protein sequence, read N- to C-terminus: uncharacterized protein (104 aa).

Residues leucine 72–isoleucine 92 form a helical membrane-spanning segment.

Its subcellular location is the membrane. This is an uncharacterized protein from Saccharomyces cerevisiae (strain ATCC 204508 / S288c) (Baker's yeast).